The sequence spans 160 residues: MRCPYCQYEDTQVKDSRPSEEGTVIRRRRICSVCGGRFTTFERVQLRELLVLKKSGRYEPFDRDKLMRSVEIAVRKRGIDPDYIERVISGIVRQLESLGEPEISSEKIGLLVMKALKSIDDIAYIRFASVYRDFRNASDFHDVIEELSKGITDTESCFDE.

The segment at 3–34 (CPYCQYEDTQVKDSRPSEEGTVIRRRRICSVC) is a zinc-finger region. Residues 49–139 (LLVLKKSGRY…VYRDFRNASD (91 aa)) enclose the ATP-cone domain.

Belongs to the NrdR family. Requires Zn(2+) as cofactor.

Functionally, negatively regulates transcription of bacterial ribonucleotide reductase nrd genes and operons by binding to NrdR-boxes. The chain is Transcriptional repressor NrdR from Bartonella henselae (strain ATCC 49882 / DSM 28221 / CCUG 30454 / Houston 1) (Rochalimaea henselae).